A 286-amino-acid polypeptide reads, in one-letter code: uncharacterized protein (286 aa).

The Proton donor role is filled by His183. Cys277 functions as the Nucleophile in the catalytic mechanism.

Belongs to the DDAH family.

This is an uncharacterized protein from Bacillus subtilis (strain 168).